The following is a 362-amino-acid chain: Phosphoserine aminotransferase (362 aa).

Ser-9 and Arg-42 together coordinate L-glutamate. Pyridoxal 5'-phosphate contacts are provided by residues 76–77 (GR), Trp-102, Thr-153, Asp-174, and Gln-197. At Lys-198 the chain carries N6-(pyridoxal phosphate)lysine. 239–240 (NT) is a pyridoxal 5'-phosphate binding site.

It belongs to the class-V pyridoxal-phosphate-dependent aminotransferase family. SerC subfamily. In terms of assembly, homodimer. The cofactor is pyridoxal 5'-phosphate.

The protein localises to the cytoplasm. The catalysed reaction is O-phospho-L-serine + 2-oxoglutarate = 3-phosphooxypyruvate + L-glutamate. It catalyses the reaction 4-(phosphooxy)-L-threonine + 2-oxoglutarate = (R)-3-hydroxy-2-oxo-4-phosphooxybutanoate + L-glutamate. Its pathway is amino-acid biosynthesis; L-serine biosynthesis; L-serine from 3-phospho-D-glycerate: step 2/3. It participates in cofactor biosynthesis; pyridoxine 5'-phosphate biosynthesis; pyridoxine 5'-phosphate from D-erythrose 4-phosphate: step 3/5. Functionally, catalyzes the reversible conversion of 3-phosphohydroxypyruvate to phosphoserine and of 3-hydroxy-2-oxo-4-phosphonooxybutanoate to phosphohydroxythreonine. In Escherichia coli O1:K1 / APEC, this protein is Phosphoserine aminotransferase.